Here is a 214-residue protein sequence, read N- to C-terminus: Urease accessory protein UreF (214 aa).

This sequence belongs to the UreF family. As to quaternary structure, ureD, UreF and UreG form a complex that acts as a GTP-hydrolysis-dependent molecular chaperone, activating the urease apoprotein by helping to assemble the nickel containing metallocenter of UreC. The UreE protein probably delivers the nickel.

It localises to the cytoplasm. Its function is as follows. Required for maturation of urease via the functional incorporation of the urease nickel metallocenter. The sequence is that of Urease accessory protein UreF from Ruegeria sp. (strain TM1040) (Silicibacter sp.).